A 290-amino-acid chain; its full sequence is Undecaprenyl-diphosphatase (290 aa).

Transmembrane regions (helical) follow at residues 5-25 (IGIFEAIVLGFVQGITEYFPI), 44-64 (GTAYSAVIQLGSLLAVLTYFY), 88-108 (VRLFWGIILGTIPIVIAGLAL), 122-142 (LSVIAVASIVMAALLWLSESL), 152-172 (IRVIDGILIGCAQALALVPGV), 195-215 (FSFLLAIPAIFLSGLLELKVL), 226-246 (PIVAGFVSSTVFSYLAIAWLL), and 255-275 (LVFVIYRFFFGALLLGLLAAG).

This sequence belongs to the UppP family.

The protein localises to the cell inner membrane. The catalysed reaction is di-trans,octa-cis-undecaprenyl diphosphate + H2O = di-trans,octa-cis-undecaprenyl phosphate + phosphate + H(+). Functionally, catalyzes the dephosphorylation of undecaprenyl diphosphate (UPP). Confers resistance to bacitracin. This Gloeobacter violaceus (strain ATCC 29082 / PCC 7421) protein is Undecaprenyl-diphosphatase.